A 129-amino-acid polypeptide reads, in one-letter code: M-zodatoxin-Lt8f (129 aa).

The first 20 residues, 1–20 (MKYFVVALALVAAFACIAES), serve as a signal peptide directing secretion. A propeptide spanning residues 21–60 (KPAESEHELAEVEEENELADLEDAVWLEHLADLSDLEEAR) is cleaved from the precursor. The Processing quadruplet motif signature appears at 57–60 (EEAR).

Post-translationally, cleavage of the propeptide depends on the processing quadruplet motif (XXXR, with at least one of X being E). As to expression, expressed by the venom gland.

Its subcellular location is the secreted. Functionally, insecticidal, cytolytic and antimicrobial peptide. Has insecticidal activity against the flesh fly S.carnaria. Has antibacterial activity against the Gram-negative bacteria E.coli. Forms voltage-dependent, ion-permeable channels in membranes. At high concentration causes cell membrane lysis. This Lachesana tarabaevi (Spider) protein is M-zodatoxin-Lt8f (cit 1-7).